Reading from the N-terminus, the 315-residue chain is Putative 2-hydroxyacid dehydrogenase HI_1556 (315 aa).

Residues T73, 156–157, 231–233, and D257 contribute to the NAD(+) site; these read CL and TGR. The active site involves R233. E262 is a catalytic residue. H285 serves as the catalytic Proton donor. 285–288 contacts NAD(+); sequence HIAW.

The protein belongs to the D-isomer specific 2-hydroxyacid dehydrogenase family.

This Haemophilus influenzae (strain ATCC 51907 / DSM 11121 / KW20 / Rd) protein is Putative 2-hydroxyacid dehydrogenase HI_1556.